Reading from the N-terminus, the 379-residue chain is Bifunctional enzyme IspD/IspF (379 aa).

Positions 1–223 (MTVAVIIVAA…RERKGLTMDV (223 aa)) are 2-C-methyl-D-erythritol 4-phosphate cytidylyltransferase. A 2-C-methyl-D-erythritol 2,4-cyclodiphosphate synthase region spans residues 224 to 379 (RLGNGYDVHA…SIATVTLIGA (156 aa)). A divalent metal cation contacts are provided by aspartate 230 and histidine 232. 4-CDP-2-C-methyl-D-erythritol 2-phosphate is bound by residues 230 to 232 (DVH) and 256 to 257 (HS). A divalent metal cation is bound at residue histidine 264. 4-CDP-2-C-methyl-D-erythritol 2-phosphate is bound by residues 278 to 280 (DIG), 354 to 357 (TTSE), phenylalanine 361, and arginine 364.

It in the N-terminal section; belongs to the IspD/TarI cytidylyltransferase family. IspD subfamily. In the C-terminal section; belongs to the IspF family. Requires a divalent metal cation as cofactor.

The catalysed reaction is 2-C-methyl-D-erythritol 4-phosphate + CTP + H(+) = 4-CDP-2-C-methyl-D-erythritol + diphosphate. It catalyses the reaction 4-CDP-2-C-methyl-D-erythritol 2-phosphate = 2-C-methyl-D-erythritol 2,4-cyclic diphosphate + CMP. Its pathway is isoprenoid biosynthesis; isopentenyl diphosphate biosynthesis via DXP pathway; isopentenyl diphosphate from 1-deoxy-D-xylulose 5-phosphate: step 2/6. It functions in the pathway isoprenoid biosynthesis; isopentenyl diphosphate biosynthesis via DXP pathway; isopentenyl diphosphate from 1-deoxy-D-xylulose 5-phosphate: step 4/6. Bifunctional enzyme that catalyzes the formation of 4-diphosphocytidyl-2-C-methyl-D-erythritol from CTP and 2-C-methyl-D-erythritol 4-phosphate (MEP) (IspD), and catalyzes the conversion of 4-diphosphocytidyl-2-C-methyl-D-erythritol 2-phosphate (CDP-ME2P) to 2-C-methyl-D-erythritol 2,4-cyclodiphosphate (ME-CPP) with a corresponding release of cytidine 5-monophosphate (CMP) (IspF). This Rhodobacter capsulatus (strain ATCC BAA-309 / NBRC 16581 / SB1003) protein is Bifunctional enzyme IspD/IspF.